A 279-amino-acid chain; its full sequence is Dermonecrotic toxin LbSicTox-alphaIB1a (279 aa).

The active site involves H11. Mg(2+) is bound by residues E31 and D33. H47 functions as the Nucleophile in the catalytic mechanism. Disulfide bonds link C51/C57 and C53/C196. D91 lines the Mg(2+) pocket.

Belongs to the arthropod phospholipase D family. Class II subfamily. Class IIa sub-subfamily. The cofactor is Mg(2+). Expressed by the venom gland.

It localises to the secreted. The catalysed reaction is an N-(acyl)-sphingosylphosphocholine = an N-(acyl)-sphingosyl-1,3-cyclic phosphate + choline. It carries out the reaction an N-(acyl)-sphingosylphosphoethanolamine = an N-(acyl)-sphingosyl-1,3-cyclic phosphate + ethanolamine. The enzyme catalyses a 1-acyl-sn-glycero-3-phosphocholine = a 1-acyl-sn-glycero-2,3-cyclic phosphate + choline. It catalyses the reaction a 1-acyl-sn-glycero-3-phosphoethanolamine = a 1-acyl-sn-glycero-2,3-cyclic phosphate + ethanolamine. Its function is as follows. Dermonecrotic toxins cleave the phosphodiester linkage between the phosphate and headgroup of certain phospholipids (sphingolipid and lysolipid substrates), forming an alcohol (often choline) and a cyclic phosphate. This toxin acts on sphingomyelin (SM) with high activity (about 30.5-31.5 U/mg). It may also act on ceramide phosphoethanolamine (CPE), lysophosphatidylcholine (LPC) and lysophosphatidylethanolamine (LPE), but not on lysophosphatidylserine (LPS), and lysophosphatidylglycerol (LPG). It acts by transphosphatidylation, releasing exclusively cyclic phosphate products as second products. Induces dermonecrosis, hemolysis, increased vascular permeability, edema, inflammatory response, and platelet aggregation. Is lethal to mice. The chain is Dermonecrotic toxin LbSicTox-alphaIB1a from Loxosceles boneti (North American fiddleback spider).